Reading from the N-terminus, the 160-residue chain is Transcription antitermination protein NusB (160 aa).

The protein belongs to the NusB family.

Its function is as follows. Involved in transcription antitermination. Required for transcription of ribosomal RNA (rRNA) genes. Binds specifically to the boxA antiterminator sequence of the ribosomal RNA (rrn) operons. The polypeptide is Transcription antitermination protein NusB (Mycolicibacterium smegmatis (strain ATCC 700084 / mc(2)155) (Mycobacterium smegmatis)).